Reading from the N-terminus, the 239-residue chain is Phosphoribosylaminoimidazole-succinocarboxamide synthase (239 aa).

It belongs to the SAICAR synthetase family.

The catalysed reaction is 5-amino-1-(5-phospho-D-ribosyl)imidazole-4-carboxylate + L-aspartate + ATP = (2S)-2-[5-amino-1-(5-phospho-beta-D-ribosyl)imidazole-4-carboxamido]succinate + ADP + phosphate + 2 H(+). It functions in the pathway purine metabolism; IMP biosynthesis via de novo pathway; 5-amino-1-(5-phospho-D-ribosyl)imidazole-4-carboxamide from 5-amino-1-(5-phospho-D-ribosyl)imidazole-4-carboxylate: step 1/2. The chain is Phosphoribosylaminoimidazole-succinocarboxamide synthase from Bacillus cereus (strain G9842).